The following is a 430-amino-acid chain: tRNA(Ile)-lysidine synthase (430 aa).

Position 27–32 (27–32 (SGGSDS)) interacts with ATP.

Belongs to the tRNA(Ile)-lysidine synthase family.

It is found in the cytoplasm. The catalysed reaction is cytidine(34) in tRNA(Ile2) + L-lysine + ATP = lysidine(34) in tRNA(Ile2) + AMP + diphosphate + H(+). Functionally, ligates lysine onto the cytidine present at position 34 of the AUA codon-specific tRNA(Ile) that contains the anticodon CAU, in an ATP-dependent manner. Cytidine is converted to lysidine, thus changing the amino acid specificity of the tRNA from methionine to isoleucine. The sequence is that of tRNA(Ile)-lysidine synthase from Rickettsia felis (strain ATCC VR-1525 / URRWXCal2) (Rickettsia azadi).